A 504-amino-acid chain; its full sequence is Protein anon-37Cs (504 aa).

Low levels seen in adult heads, thorax, abdomen and ovaries, high levels in testes.

The protein localises to the cytoplasm. Has a non-vital function. The chain is Protein anon-37Cs (anon-37Cs) from Drosophila melanogaster (Fruit fly).